A 152-amino-acid polypeptide reads, in one-letter code: MLSIAIGADSAAIDLKNTITDYLQQKGLTVTDYSYDPTGENPIYPDVAYTLAHAIKDGKHQRGILLCGTGIGMCIVANKVNGIRAAQCHDTYSAQRARKSNNAQVIALGARVIGPELAKEIIGAWLDAEFEGGGSAPKVEKIGYYEHQEKHQ.

Residue C67 is the Proton acceptor of the active site.

The protein belongs to the LacAB/RpiB family.

It catalyses the reaction D-erythrulose 4-phosphate = D-erythrose 4-phosphate. It functions in the pathway carbohydrate metabolism. Its function is as follows. Involved in catabolism of D-apiose. Catalyzes the isomerization of D-erythrulose 4-phosphate to D-erythrose 4-phosphate. The protein is D-erythrulose-4-phosphate isomerase of Pectobacterium atrosepticum (strain SCRI 1043 / ATCC BAA-672) (Erwinia carotovora subsp. atroseptica).